Reading from the N-terminus, the 427-residue chain is Mitochondrial distribution and morphology protein 10 (427 aa).

Low complexity predominate over residues 393–414 (SSYANSQATAGAQGSSGGPPTS). A disordered region spans residues 393 to 427 (SSYANSQATAGAQGSSGGPPTSYWRGVGVSVSYSS).

It belongs to the MDM10 family. In terms of assembly, component of the ER-mitochondria encounter structure (ERMES) or MDM complex, composed of mmm1, mdm10, mdm12 and mdm34. Associates with the mitochondrial outer membrane sorting assembly machinery SAM(core) complex.

It localises to the mitochondrion outer membrane. Component of the ERMES/MDM complex, which serves as a molecular tether to connect the endoplasmic reticulum and mitochondria. Components of this complex are involved in the control of mitochondrial shape and protein biogenesis and may function in phospholipid exchange. mdm10 is involved in the late assembly steps of the general translocase of the mitochondrial outer membrane (TOM complex). Functions in the tom40-specific route of the assembly of outer membrane beta-barrel proteins, including the association of tom40 with the receptor tom22 and small TOM proteins. Can associate with the SAM(core) complex as well as the mdm12-mmm1 complex, both involved in late steps of the major beta-barrel assembly pathway, that is responsible for biogenesis of all outer membrane beta-barrel proteins. May act as a switch that shuttles between both complexes and channels precursor proteins into the tom40-specific pathway. Plays a role in mitochondrial morphology and in the inheritance of mitochondria. The polypeptide is Mitochondrial distribution and morphology protein 10 (mdmB) (Emericella nidulans (strain FGSC A4 / ATCC 38163 / CBS 112.46 / NRRL 194 / M139) (Aspergillus nidulans)).